The primary structure comprises 95 residues: MNNKLTALIFHGLLAIASCKWLNEKSIQNKIDEKIGKNFLGGMAKAVVHKLAKNEFMCMANMDPTGSCETHCQKASGEKGYCHGTKCKCGVPLSY.

A signal peptide spans 1-19; sequence MNNKLTALIFHGLLAIASC. The 41-residue stretch at 55–95 folds into the BetaSPN-type CS-alpha/beta domain; sequence EFMCMANMDPTGSCETHCQKASGEKGYCHGTKCKCGVPLSY. Disulfide bonds link Cys-58-Cys-82, Cys-68-Cys-87, and Cys-72-Cys-89.

Belongs to the long chain scorpion toxin family. Class 3 subfamily. As to expression, expressed by the venom gland.

The protein resides in the secreted. Has antimicrobial activity against yeasts and bacteria. The sequence is that of Opiscorpine-2 from Opistophthalmus carinatus (African yellow leg scorpion).